We begin with the raw amino-acid sequence, 166 residues long: Protein-export protein SecB (166 aa).

The protein belongs to the SecB family. Homotetramer, a dimer of dimers. One homotetramer interacts with 1 SecA dimer.

Its subcellular location is the cytoplasm. One of the proteins required for the normal export of preproteins out of the cell cytoplasm. It is a molecular chaperone that binds to a subset of precursor proteins, maintaining them in a translocation-competent state. It also specifically binds to its receptor SecA. The protein is Protein-export protein SecB of Actinobacillus pleuropneumoniae serotype 7 (strain AP76).